The following is a 426-amino-acid chain: Serine hydroxymethyltransferase 1 (426 aa).

Residues Leu-118 and 122–124 (GHL) contribute to the (6S)-5,6,7,8-tetrahydrofolate site. Lys-227 is modified (N6-(pyridoxal phosphate)lysine).

This sequence belongs to the SHMT family. In terms of assembly, homodimer. Pyridoxal 5'-phosphate is required as a cofactor.

It is found in the cytoplasm. The enzyme catalyses (6R)-5,10-methylene-5,6,7,8-tetrahydrofolate + glycine + H2O = (6S)-5,6,7,8-tetrahydrofolate + L-serine. Its pathway is one-carbon metabolism; tetrahydrofolate interconversion. It functions in the pathway amino-acid biosynthesis; glycine biosynthesis; glycine from L-serine: step 1/1. In terms of biological role, catalyzes the reversible interconversion of serine and glycine with tetrahydrofolate (THF) serving as the one-carbon carrier. This reaction serves as the major source of one-carbon groups required for the biosynthesis of purines, thymidylate, methionine, and other important biomolecules. Also exhibits THF-independent aldolase activity toward beta-hydroxyamino acids, producing glycine and aldehydes, via a retro-aldol mechanism. The polypeptide is Serine hydroxymethyltransferase 1 (Mycobacterium bovis (strain ATCC BAA-935 / AF2122/97)).